We begin with the raw amino-acid sequence, 867 residues long: Probable potassium transporter 15 (867 aa).

Residues 1–13 show a composition bias toward low complexity; the sequence is MAASSSSSASASA. A disordered region spans residues 1–88; the sequence is MAASSSSSAS…EGEGEDGEKQ (88 aa). The Cytoplasmic portion of the chain corresponds to 1–124; the sequence is MAASSSSSAS…DSEEFDFGRT (124 aa). Acidic residues predominate over residues 32–44; sequence TEEDDEGEEDGDT. Low complexity predominate over residues 45-54; that stretch reads VEAAAAAVGA. The segment covering 63–84 has biased composition (acidic residues); that stretch reads SEEEEDEEDGGGGGEGEGEGED. A helical membrane pass occupies residues 125 to 145; the sequence is MFLALQTLAVVFGDIGISPLY. The Extracellular portion of the chain corresponds to 146 to 167; that stretch reads TFDVMFSKYPILGEEDVLGALS. A helical membrane pass occupies residues 168–188; sequence LVLYTLISMPLVKYVLVVLWA. Residues 189 to 252 are Cytoplasmic-facing; sequence NDDGEGGIFA…KLESSLLLKK (64 aa). A helical transmembrane segment spans residues 253-273; that stretch reads LLLGLVLFGTAMFISNGVITP. The Extracellular segment spans residues 274–285; the sequence is AMSVLSAVSGLK. Residues 286-306 form a helical membrane-spanning segment; that stretch reads VGIPNASQGLVVMISVVLLVI. Over 307-317 the chain is Cytoplasmic; sequence LYSVQRYATSK. The chain crosses the membrane as a helical span at residues 318–338; sequence MGFALGPSLLIWFCCLGGIGI. Residues 339 to 365 are Extracellular-facing; the sequence is YNLSTYGPAAFKAFNPLYIIYYFGRNP. A glycan (N-linked (GlcNAc...) asparagine) is linked at asparagine 340. Residues 366-386 form a helical membrane-spanning segment; it reads FQAWLSLAGCLLCATGSEAIF. At 387-400 the chain is on the cytoplasmic side; the sequence is ANLSYFPVRYVQSM. The helical transmembrane segment at 401-421 threads the bilayer; sequence FALLVLPCLVLAYLGQGAFLI. Residues 422–433 are Extracellular-facing; sequence ANQNSSEQIFFS. Asparagine 425 is a glycosylation site (N-linked (GlcNAc...) asparagine). The helical transmembrane segment at 434 to 454 threads the bilayer; the sequence is SIPSGVFWPVFLIANLAALIA. Residues 455 to 490 are Cytoplasmic-facing; sequence SRTMTTAIFQCLKQSIALGCFPRLKIIHTSRKFMAK. Residues 491 to 511 traverse the membrane as a helical segment; it reads IYIPVVNWFLLFSCLGFILLF. Residues 512–522 are Extracellular-facing; sequence RSIYDVGNAYA. The helical transmembrane segment at 523 to 543 threads the bilayer; it reads IAELGVMIMATVYVTIIMLLI. The Cytoplasmic portion of the chain corresponds to 544–545; it reads WE. A helical membrane pass occupies residues 546-566; the sequence is TSIVKVLSFVITFLSLELVFF. Over 567-572 the chain is Extracellular; the sequence is SSSLSS. The helical transmembrane segment at 573–593 threads the bilayer; sequence VGDGGWALIIFASGILMVMFI. Over 594-867 the chain is Cytoplasmic; it reads WNYGSKLKYD…VMQVRLTSYV (274 aa).

This sequence belongs to the HAK/KUP transporter (TC 2.A.72.3) family.

It localises to the membrane. In terms of biological role, high-affinity potassium transporter. The polypeptide is Probable potassium transporter 15 (HAK15) (Oryza sativa subsp. japonica (Rice)).